A 483-amino-acid polypeptide reads, in one-letter code: GTPase Der (483 aa).

2 EngA-type G domains span residues 3-167 (FTVA…GEER) and 212-387 (LRIA…EIWN). GTP contacts are provided by residues 9 to 16 (GRPNVGKS), 56 to 60 (DTAGL), 119 to 122 (NKAE), 218 to 225 (GRPNAGKS), 265 to 269 (DTAGL), and 330 to 333 (NKWD). Residues 388–472 (RRVSTGRLNR…PIRLSLRTSD (85 aa)) form the KH-like domain.

The protein belongs to the TRAFAC class TrmE-Era-EngA-EngB-Septin-like GTPase superfamily. EngA (Der) GTPase family. In terms of assembly, associates with the 50S ribosomal subunit.

GTPase that plays an essential role in the late steps of ribosome biogenesis. The chain is GTPase Der from Brucella anthropi (strain ATCC 49188 / DSM 6882 / CCUG 24695 / JCM 21032 / LMG 3331 / NBRC 15819 / NCTC 12168 / Alc 37) (Ochrobactrum anthropi).